The chain runs to 601 residues: NADH-quinone oxidoreductase subunit C/D (601 aa).

Residues 1–192 are NADH dehydrogenase I subunit C; it reads MIVPDLVADA…PPYSLTEDQE (192 aa). Residues 216–601 are NADH dehydrogenase I subunit D; it reads DFMFLNLGPN…IDFVMADVDR (386 aa).

It in the N-terminal section; belongs to the complex I 30 kDa subunit family. This sequence in the C-terminal section; belongs to the complex I 49 kDa subunit family. NDH-1 is composed of 13 different subunits. Subunits NuoB, CD, E, F, and G constitute the peripheral sector of the complex.

Its subcellular location is the cell inner membrane. The catalysed reaction is a quinone + NADH + 5 H(+)(in) = a quinol + NAD(+) + 4 H(+)(out). Functionally, NDH-1 shuttles electrons from NADH, via FMN and iron-sulfur (Fe-S) centers, to quinones in the respiratory chain. The immediate electron acceptor for the enzyme in this species is believed to be ubiquinone. Couples the redox reaction to proton translocation (for every two electrons transferred, four hydrogen ions are translocated across the cytoplasmic membrane), and thus conserves the redox energy in a proton gradient. This is NADH-quinone oxidoreductase subunit C/D from Gluconacetobacter diazotrophicus (strain ATCC 49037 / DSM 5601 / CCUG 37298 / CIP 103539 / LMG 7603 / PAl5).